The following is a 581-amino-acid chain: Multidrug and toxin extrusion protein 2 (581 aa).

Topologically, residues 1–33 (MDSLQDTVPLDHGGCCPALSRLVPRGFGTEMWT) are cytoplasmic. The chain crosses the membrane as a helical span at residues 34 to 54 (LFALSGPLFLFQVLTFMIYIV). At 55-66 (STVFCGHLGKVE) the chain is on the extracellular side. The helical transmembrane segment at 67–87 (LASVTLAVAFVNVCGVSVGVG) threads the bilayer. Over 88 to 119 (LSSACDTLMSQSFGSPNKKHVGVILQRGALVL) the chain is Cytoplasmic. The chain crosses the membrane as a helical span at residues 120 to 140 (LLCCLPCWALFLNTQHILLLF). At 141–153 (RQDPEVSRLTQDY) the chain is on the extracellular side. The chain crosses the membrane as a helical span at residues 154–174 (VMIFIPGLPVIFLYNLLAKYL). Residues 175 to 183 (QNQKITWPQ) lie on the Cytoplasmic side of the membrane. The chain crosses the membrane as a helical span at residues 184-204 (VLSGVVGNCVNGVANYALVSV). Residues 205-212 (LNLGVRGS) are Extracellular-facing. The chain crosses the membrane as a helical span at residues 213-233 (AYANIISQFAQTVFLLLYIVL). Over 234–253 (KKLHLETWAGWSSQCLQDWG) the chain is Cytoplasmic. Residues 254–273 (PFFSLAVPSMLMICVEWWAY) form a helical membrane-spanning segment. The Extracellular portion of the chain corresponds to 274 to 317 (EIGSFLMGLLSVVDLSAQAVIYEVATVTYMRHSHHLAYTAHVAR). A helical transmembrane segment spans residues 318 to 338 (IPLGLSIGVCVRVGMALGAAD). At 339–346 (TVQAKRSA) the chain is on the cytoplasmic side. Residues 347-367 (VSGVLSIVGISLVLGTLISIL) traverse the membrane as a helical segment. At 368 to 380 (KNQLGHIFTNDED) the chain is on the extracellular side. The helical transmembrane segment at 381–401 (VIALVSQVLPVYSVFHVFEAI) threads the bilayer. The Cytoplasmic portion of the chain corresponds to 402–420 (CCVYGGVLRGTGKQAFGAA). The chain crosses the membrane as a helical span at residues 421–441 (VNAITYYIIGLPLGILLTFVV). At 442 to 444 (RMR) the chain is on the extracellular side. The chain crosses the membrane as a helical span at residues 445 to 465 (IMGLWLGMLACVFLATAAFVA). At 466 to 557 (YTARLDWKLA…LSVKQLVIRR (92 aa)) the chain is on the cytoplasmic side. Positions 481 to 513 (KHSGQQQQQQRAESTATRSGPEKAVLSSVATGS) are disordered. A helical transmembrane segment spans residues 558-578 (GAALGAASATLMVGLTVRILA). Residues 579-581 (TRH) are Extracellular-facing.

The protein belongs to the multi antimicrobial extrusion (MATE) (TC 2.A.66.1) family.

The protein resides in the cell membrane. Its subcellular location is the apical cell membrane. It catalyses the reaction thiamine(out) + H(+)(in) = thiamine(in) + H(+)(out). The catalysed reaction is estrone 3-sulfate(in) + H(+)(out) = estrone 3-sulfate(out) + H(+)(in). The enzyme catalyses creatinine(in) + H(+)(out) = creatinine(out) + H(+)(in). Multidrug efflux pump that functions as a H(+)/organic cation antiporter. Mediates the efflux of cationic compounds, such as the model cations, tetraethylammonium (TEA) and 1-methyl-4-phenylpyridinium (MPP+), the platinum-based drug oxaliplatin or weak bases that are positively charged at physiological pH, cimetidine or the antidiabetic drug metformin. Mediates the efflux of the endogenous compounds creatinine, thiamine and estrone-3-sulfate. Plays a physiological role in the excretion of drugs, toxins and endogenous metabolites through the kidney. This Pongo abelii (Sumatran orangutan) protein is Multidrug and toxin extrusion protein 2 (SLC47A2).